The primary structure comprises 393 residues: Riboflavin biosynthesis protein RibBA (393 aa).

A DHBP synthase region spans residues Met-1–Ala-200. Residues Arg-27–Glu-28, Asp-32, Arg-139–Thr-143, and Glu-163 contribute to the D-ribulose 5-phosphate site. Glu-28 is a Mg(2+) binding site. Residue His-142 participates in Mg(2+) binding. The interval Val-201–Ile-393 is GTP cyclohydrolase II. Arg-249–Ala-253 serves as a coordination point for GTP. Residues Cys-254, Cys-265, and Cys-267 each coordinate Zn(2+). GTP is bound by residues Gln-270, Glu-291 to Arg-293, and Thr-313. The Proton acceptor; for GTP cyclohydrolase activity role is filled by Asp-325. Residue Arg-327 is the Nucleophile; for GTP cyclohydrolase activity of the active site. GTP contacts are provided by Ser-348 and Lys-353.

In the N-terminal section; belongs to the DHBP synthase family. It in the C-terminal section; belongs to the GTP cyclohydrolase II family. Mg(2+) serves as cofactor. The cofactor is Mn(2+). It depends on Zn(2+) as a cofactor.

The enzyme catalyses D-ribulose 5-phosphate = (2S)-2-hydroxy-3-oxobutyl phosphate + formate + H(+). It catalyses the reaction GTP + 4 H2O = 2,5-diamino-6-hydroxy-4-(5-phosphoribosylamino)-pyrimidine + formate + 2 phosphate + 3 H(+). Its pathway is cofactor biosynthesis; riboflavin biosynthesis; 2-hydroxy-3-oxobutyl phosphate from D-ribulose 5-phosphate: step 1/1. The protein operates within cofactor biosynthesis; riboflavin biosynthesis; 5-amino-6-(D-ribitylamino)uracil from GTP: step 1/4. In terms of biological role, catalyzes the conversion of D-ribulose 5-phosphate to formate and 3,4-dihydroxy-2-butanone 4-phosphate. Its function is as follows. Catalyzes the conversion of GTP to 2,5-diamino-6-ribosylamino-4(3H)-pyrimidinone 5'-phosphate (DARP), formate and pyrophosphate. The protein is Riboflavin biosynthesis protein RibBA of Staphylococcus epidermidis (strain ATCC 12228 / FDA PCI 1200).